A 167-amino-acid polypeptide reads, in one-letter code: NADH-quinone oxidoreductase subunit B 2 (167 aa).

Positions 39, 40, 104, and 134 each coordinate [4Fe-4S] cluster.

It belongs to the complex I 20 kDa subunit family. As to quaternary structure, NDH-1 is composed of 14 different subunits. Subunits NuoB, C, D, E, F, and G constitute the peripheral sector of the complex. [4Fe-4S] cluster serves as cofactor.

Its subcellular location is the cell inner membrane. It carries out the reaction a quinone + NADH + 5 H(+)(in) = a quinol + NAD(+) + 4 H(+)(out). NDH-1 shuttles electrons from NADH, via FMN and iron-sulfur (Fe-S) centers, to quinones in the respiratory chain. Couples the redox reaction to proton translocation (for every two electrons transferred, four hydrogen ions are translocated across the cytoplasmic membrane), and thus conserves the redox energy in a proton gradient. This chain is NADH-quinone oxidoreductase subunit B 2, found in Burkholderia mallei (strain NCTC 10247).